The chain runs to 699 residues: Macoilin-2 (699 aa).

4 helical membrane passes run 28 to 48, 75 to 95, 120 to 140, and 154 to 174; these read TFLY…DFVL, AFSV…LLFI, VCLP…AIRF, and FAAH…KSYV. 4 disordered regions span residues 219–289, 322–411, 432–451, and 679–699; these read AAAA…SILP, LLKD…PNNQ, LQAS…SLGT, and FMDT…PLKK. N-linked (GlcNAc...) asparagine glycans are attached at residues Asn241, Asn267, Asn345, and Asn365. Basic and acidic residues predominate over residues 257-271; that stretch reads LEYREKERGKNESKK. Residues 329 to 346 show a composition bias toward low complexity; the sequence is SSSSSSTSSNSNKNYKNA. The segment covering 366–382 has biased composition (low complexity); sequence GSVPSSSGPSSSASSSS. Asn690 carries N-linked (GlcNAc...) asparagine glycosylation.

The protein belongs to the macoilin family.

The protein localises to the nucleus membrane. The protein resides in the cell projection. Its subcellular location is the axon. It localises to the rough endoplasmic reticulum membrane. In terms of biological role, may play a role in the regulation of neuronal activity. The sequence is that of Macoilin-2 from Danio rerio (Zebrafish).